Reading from the N-terminus, the 400-residue chain is MSVIYLDNNATTKVDPDVVEAIMPYLTDYYGNPSSMHTFGGQLGKAVRTAREQVAALLGADESEIVFTSCGTEGDNAAIRAALLAQPEKRHIITTQVEHPAVLNVCKQLETQGYTVTYLSVNSHGQLDLDELEASLTGNTALVTIMYANNETGTVFPIEEIGKRVKERGAIFHVDAVQAVGKIPLNMKTSTIDMLTISGHKIHAPKGIGALYVRRGVRFRPLLIGGHQERGRRAGTENVPGIVGLGKAAELELIHIETAIKKETRLRDRLEQTLLAKIPDCEVNGDITQRLPNTTNIGFKYIEGEAILLSLNKYGICASSGSACTSGSLEPSHVLRAMGLPYTTLHGSIRFSLCRYTTEAQIDRVIEVMPEIVERLRALSPFKNDEAGWLQAQEQTLAHR.

Pyridoxal 5'-phosphate is bound by residues glycine 71–threonine 72, asparagine 150, glutamine 178, and serine 198–histidine 200. Lysine 201 is modified (N6-(pyridoxal phosphate)lysine). Threonine 236 serves as a coordination point for pyridoxal 5'-phosphate. The active-site Cysteine persulfide intermediate is the cysteine 324. A [2Fe-2S] cluster-binding site is contributed by cysteine 324.

Belongs to the class-V pyridoxal-phosphate-dependent aminotransferase family. NifS/IscS subfamily. As to quaternary structure, homodimer. Pyridoxal 5'-phosphate serves as cofactor.

The catalysed reaction is (sulfur carrier)-H + L-cysteine = (sulfur carrier)-SH + L-alanine. Functionally, catalyzes the removal of elemental sulfur atoms from cysteine to produce alanine. Seems to participate in the biosynthesis of the nitrogenase metalloclusters by providing the inorganic sulfur required for the Fe-S core formation. The sequence is that of Cysteine desulfurase from Nostoc sp. (strain PCC 7120 / SAG 25.82 / UTEX 2576).